The sequence spans 67 residues: Small ribosomal subunit protein eS31 (67 aa).

Residues cysteine 31, cysteine 34, cysteine 49, and cysteine 52 each contribute to the Zn(2+) site. Residues 31 to 52 form a C4-type zinc finger; sequence CPKCGAGVFMAEHLNRFACGKC.

This sequence belongs to the eukaryotic ribosomal protein eS31 family. Part of the 30S ribosomal subunit. The cofactor is Zn(2+).

The protein is Small ribosomal subunit protein eS31 of Methanococcus maripaludis (strain C5 / ATCC BAA-1333).